A 431-amino-acid chain; its full sequence is Enolase (431 aa).

A (2R)-2-phosphoglycerate-binding site is contributed by glutamine 163. The Proton donor role is filled by glutamate 205. 3 residues coordinate Mg(2+): aspartate 242, glutamate 288, and aspartate 315. Residues lysine 340, arginine 369, serine 370, and lysine 391 each contribute to the (2R)-2-phosphoglycerate site. Lysine 340 serves as the catalytic Proton acceptor.

This sequence belongs to the enolase family. It depends on Mg(2+) as a cofactor.

It localises to the cytoplasm. Its subcellular location is the secreted. The protein resides in the cell surface. The catalysed reaction is (2R)-2-phosphoglycerate = phosphoenolpyruvate + H2O. The protein operates within carbohydrate degradation; glycolysis; pyruvate from D-glyceraldehyde 3-phosphate: step 4/5. In terms of biological role, catalyzes the reversible conversion of 2-phosphoglycerate (2-PG) into phosphoenolpyruvate (PEP). It is essential for the degradation of carbohydrates via glycolysis. The protein is Enolase of Bacillus anthracis (strain A0248).